Reading from the N-terminus, the 464-residue chain is tRNA modification GTPase MnmE (464 aa).

3 residues coordinate (6S)-5-formyl-5,6,7,8-tetrahydrofolate: Arg-27, Glu-89, and Arg-128. The region spanning 225–384 (GLATAIIGHP…LEDRIAAMFF (160 aa)) is the TrmE-type G domain. Asn-235 contributes to the K(+) binding site. GTP-binding positions include 235–240 (NVGKSS), 254–260 (TDVAGTT), and 279–282 (DTAG). Residue Ser-239 participates in Mg(2+) binding. K(+)-binding residues include Thr-254, Val-256, and Thr-259. A Mg(2+)-binding site is contributed by Thr-260. Lys-464 serves as a coordination point for (6S)-5-formyl-5,6,7,8-tetrahydrofolate.

This sequence belongs to the TRAFAC class TrmE-Era-EngA-EngB-Septin-like GTPase superfamily. TrmE GTPase family. Homodimer. Heterotetramer of two MnmE and two MnmG subunits. Requires K(+) as cofactor.

The protein localises to the cytoplasm. Its function is as follows. Exhibits a very high intrinsic GTPase hydrolysis rate. Involved in the addition of a carboxymethylaminomethyl (cmnm) group at the wobble position (U34) of certain tRNAs, forming tRNA-cmnm(5)s(2)U34. The chain is tRNA modification GTPase MnmE from Pediococcus pentosaceus (strain ATCC 25745 / CCUG 21536 / LMG 10740 / 183-1w).